Reading from the N-terminus, the 296-residue chain is Formamidopyrimidine-DNA glycosylase (296 aa).

Proline 2 functions as the Schiff-base intermediate with DNA in the catalytic mechanism. The active-site Proton donor is glutamate 3. Lysine 58 (proton donor; for beta-elimination activity) is an active-site residue. 3 residues coordinate DNA: histidine 106, arginine 125, and lysine 168. The FPG-type zinc-finger motif lies at 259–295 (RVYDRVGHACPTKGCTGRIGRIVQGGRSTFFCETCQV). Arginine 285 (proton donor; for delta-elimination activity) is an active-site residue.

The protein belongs to the FPG family. Monomer. The cofactor is Zn(2+).

The catalysed reaction is Hydrolysis of DNA containing ring-opened 7-methylguanine residues, releasing 2,6-diamino-4-hydroxy-5-(N-methyl)formamidopyrimidine.. It carries out the reaction 2'-deoxyribonucleotide-(2'-deoxyribose 5'-phosphate)-2'-deoxyribonucleotide-DNA = a 3'-end 2'-deoxyribonucleotide-(2,3-dehydro-2,3-deoxyribose 5'-phosphate)-DNA + a 5'-end 5'-phospho-2'-deoxyribonucleoside-DNA + H(+). Its function is as follows. Involved in base excision repair of DNA damaged by oxidation or by mutagenic agents. Acts as a DNA glycosylase that recognizes and removes damaged bases. Has a preference for oxidized purines, such as 7,8-dihydro-8-oxoguanine (8-oxoG). Has AP (apurinic/apyrimidinic) lyase activity and introduces nicks in the DNA strand. Cleaves the DNA backbone by beta-delta elimination to generate a single-strand break at the site of the removed base with both 3'- and 5'-phosphates. In Methylorubrum populi (strain ATCC BAA-705 / NCIMB 13946 / BJ001) (Methylobacterium populi), this protein is Formamidopyrimidine-DNA glycosylase.